Consider the following 335-residue polypeptide: Methionine import ATP-binding protein MetN (335 aa).

The ABC transporter domain maps to 2–241; sequence IQFQRLHKSY…PKHATTRRFV (240 aa). Residue 38–45 coordinates ATP; it reads GHSGAGKS.

Belongs to the ABC transporter superfamily. Methionine importer (TC 3.A.1.24) family. As to quaternary structure, the complex is composed of two ATP-binding proteins (MetN), two transmembrane proteins (MetI) and a solute-binding protein (MetQ).

The protein localises to the cell inner membrane. The enzyme catalyses L-methionine(out) + ATP + H2O = L-methionine(in) + ADP + phosphate + H(+). It carries out the reaction D-methionine(out) + ATP + H2O = D-methionine(in) + ADP + phosphate + H(+). Functionally, part of the ABC transporter complex MetNIQ involved in methionine import. Responsible for energy coupling to the transport system. This Xanthomonas axonopodis pv. citri (strain 306) protein is Methionine import ATP-binding protein MetN.